The primary structure comprises 334 residues: Spermatogenesis-associated protein 32 (334 aa).

The disordered stretch occupies residues 24–98 (SDHHRHHHHH…TESPEQQNYR (75 aa)). The span at 37–47 (ENEDEDTEVEA) shows a compositional bias: acidic residues. Over residues 48-60 (ELPRTEPPPKVDP) the composition is skewed to basic and acidic residues. Residues 77 to 98 (SKTTPETEGDSYTESPEQQNYR) are compositionally biased toward polar residues. A phosphoserine mark is found at Ser135 and Ser138.

Interacts with syntaxin-1 and ACTB. As to expression, highly expressed in the testis and weakly in the brain and heart.

This chain is Spermatogenesis-associated protein 32 (Spata32), found in Mus musculus (Mouse).